The primary structure comprises 700 residues: Protein claret segregational (700 aa).

Residues Ser-94 and Ser-96 each carry the phosphoserine modification. The tract at residues 141–185 (APSSITATAVKRPPVTRPAPRAAGGAAAKKPAGTGAAASSGAAAA) is disordered. Low complexity predominate over residues 149-185 (AVKRPPVTRPAPRAAGGAAAKKPAGTGAAASSGAAAA). Residues 196-346 (KARFHDLLEK…ELHNTVMDLR (151 aa)) adopt a coiled-coil conformation. The Kinesin motor domain occupies 348–670 (NIRVFCRIRP…LRFAASVNSC (323 aa)). 434-441 (GQTGSGKT) provides a ligand contact to ATP. The segment at 664–668 (AASVN) is required for minus-end directionality. The tract at residues 681-700 (LNNSVANSSTQSNNSGSFDK) is disordered.

It belongs to the TRAFAC class myosin-kinesin ATPase superfamily. Kinesin family. NCD subfamily.

The protein localises to the cytoplasm. It is found in the cytoskeleton. The catalysed reaction is ATP + H2O = ADP + phosphate + H(+). Minus-end-directed microtubule-based motor protein. Has ATPase activity. Required for normal chromosomal segregation in meiosis in females, and in early mitotic divisions of the embryo. The sequence is that of Protein claret segregational (ncd) from Drosophila melanogaster (Fruit fly).